The primary structure comprises 328 residues: Trans-O-hydroxybenzylidenepyruvate hydratase-aldolase (328 aa).

Belongs to the DapA family. Homotrimer.

The enzyme catalyses (3E)-4-(2-hydroxyphenyl)-2-oxobut-3-enoate + H2O = salicylaldehyde + pyruvate. Its pathway is aromatic compound metabolism; naphthalene degradation. Inhibited bye p-chloromercuribenzoate and salicylaldehyde. Activated by salicylate. In terms of biological role, involved in the naphthalene and naphthalenesulfonate catabolic pathway. Catalyzes the transformation of trans-O-hydroxybenzylidenepyruvate (THBPA) to salicylaldehyde and pyruvate. The reaction is reversible. Can also use 2,4-dihydroxybenzalpyruvate (2,4-DHBP) and 2,6-dihydroxybenzalpyruvate (2,6-DHBP). The polypeptide is Trans-O-hydroxybenzylidenepyruvate hydratase-aldolase (nsaE) (Sphingobium xenophagum).